Consider the following 337-residue polypeptide: Ketol-acid reductoisomerase (NADP(+)) (337 aa).

The 180-residue stretch at 1–180 folds into the KARI N-terminal Rossmann domain; it reads MQVYYDKDAD…GGTKGGVIET (180 aa). NADP(+) is bound by residues 24 to 27, arginine 47, and serine 51; that span reads YGSQ. The active site involves histidine 106. Glycine 132 contacts NADP(+). Residues 181–326 form the KARI C-terminal knotted domain; it reads TFREETETDL…AQLRAMMPWI (146 aa). Residues aspartate 189, glutamate 193, glutamate 225, and glutamate 229 each coordinate Mg(2+). Serine 250 provides a ligand contact to substrate.

Belongs to the ketol-acid reductoisomerase family. Mg(2+) serves as cofactor.

It catalyses the reaction (2R)-2,3-dihydroxy-3-methylbutanoate + NADP(+) = (2S)-2-acetolactate + NADPH + H(+). It carries out the reaction (2R,3R)-2,3-dihydroxy-3-methylpentanoate + NADP(+) = (S)-2-ethyl-2-hydroxy-3-oxobutanoate + NADPH + H(+). It functions in the pathway amino-acid biosynthesis; L-isoleucine biosynthesis; L-isoleucine from 2-oxobutanoate: step 2/4. The protein operates within amino-acid biosynthesis; L-valine biosynthesis; L-valine from pyruvate: step 2/4. Functionally, involved in the biosynthesis of branched-chain amino acids (BCAA). Catalyzes an alkyl-migration followed by a ketol-acid reduction of (S)-2-acetolactate (S2AL) to yield (R)-2,3-dihydroxy-isovalerate. In the isomerase reaction, S2AL is rearranged via a Mg-dependent methyl migration to produce 3-hydroxy-3-methyl-2-ketobutyrate (HMKB). In the reductase reaction, this 2-ketoacid undergoes a metal-dependent reduction by NADPH to yield (R)-2,3-dihydroxy-isovalerate. The sequence is that of Ketol-acid reductoisomerase (NADP(+)) from Neisseria meningitidis serogroup A / serotype 4A (strain DSM 15465 / Z2491).